Here is an 86-residue protein sequence, read N- to C-terminus: Large ribosomal subunit protein bL27 (86 aa).

The segment at 1–21 (MAHKKAAGSSRNGRDSESKRL) is disordered.

It belongs to the bacterial ribosomal protein bL27 family.

The protein is Large ribosomal subunit protein bL27 of Hahella chejuensis (strain KCTC 2396).